Consider the following 575-residue polypeptide: FAD-dependent monooxygenase rstn6 (575 aa).

The signal sequence occupies residues 1-17 (MYDVIVIGAGWCGLVAA). I106 contacts FAD. N-linked (GlcNAc...) asparagine glycans are attached at residues N239 and N295.

This sequence belongs to the FAD-binding monooxygenase family. FAD serves as cofactor.

It participates in antifungal biosynthesis. In terms of biological role, FAD-dependent monooxygenase; part of the gene cluster that mediates the biosynthesis of the tetrahydropyranyl antifungal agent restricticin that acts as an inhibitor of CYP51 and blocks the ergosterol biosynthesis. The highly reducing polyketide synthase rstn3, the short chain dehydrogenase rstn4, the cyclase rstn5, the FAD-dependent monooxygenase rstn6 and the enoylreductase rstn7 are required to generate the first stable intermediate desmethylrestrictinol. Rstn3 with rstn7 biosynthesize the first polyketide chain intermediate that is reduced by rstn4, followed by epoxidation by rstn6 before 6-endo cyclization via epoxide opening by rstn5 leads to desmethylrestrictinol. The methyltransferase rstn1 then catalyzes the C4 O-methylation of desmethylrestrictinol to produce restrictinol, and the nonribosomal peptide synthetase rstn8 catalyzes the C3 esterification of restrictinol with glycine that leads to restricticin. The chain is FAD-dependent monooxygenase rstn6 from Aspergillus nomiae NRRL (strain ATCC 15546 / NRRL 13137 / CBS 260.88 / M93).